A 534-amino-acid polypeptide reads, in one-letter code: Serine/threonine-protein kinase NLK (534 aa).

2 sufficient for interaction with DAPK3 regions span residues 8–132 (LVSC…KAHH) and 131–423 (HHHQ…SKRI). Required for interaction with TAB2 stretches follow at residues 8–311 (LVSC…VVTQ) and 441–534 (YHTC…LVWE). 2 disordered regions span residues 29–79 (AAAA…SSAA) and 97–147 (QQPY…DIEP). The span at 33–61 (GHHHHHHHHLPHLPPPHLHHHHHPQHHLH) shows a compositional bias: basic residues. Low complexity predominate over residues 110–126 (PGPAAAAPAQVQAAAAA). Basic residues predominate over residues 129–138 (KAHHHQHSHH). A Protein kinase domain is found at 145-434 (IEPDRPIGYG…AKDALAHPYL (290 aa)). ATP is bound by residues 151–159 (IGYGAFGVV) and Lys174. Residue Asp271 is the Proton acceptor of the active site. Thr305 carries the phosphothreonine; by autocatalysis modification. A TQE motif is present at residues 305-307 (TQE). Residues 435 to 534 (DEGRLRYHTC…EMPPSPLVWE (100 aa)) are required for homodimerization and kinase activation and localization to the nucleus. A Phosphoserine modification is found at Ser529.

Belongs to the protein kinase superfamily. CMGC Ser/Thr protein kinase family. MAP kinase subfamily. In terms of assembly, homodimer. Homodimerization is required for intermolecular autophosphorylation, kinase activation and nuclear localization. May interact with components of cullin-RING-based SCF (SKP1-CUL1-F-box protein) E3 ubiquitin-protein ligase complexes. Interacts with LEF1, MEF2A, MYBL1 and MYBL2. Interacts with the upstream activating kinases HIPK2 and MAP3K7/TAK1. Interaction with MAP3K7/TAK1 seems to be indirect, and may be mediated by other proteins such as STAT3, TAB1 and TAB2. Interacts with and phosphorylates a number of transcription factors including FOXO1, FOXO3, FOXO4, MYB, NOTCH1 and TCF7L2/TCF4. Interacts with DAPK3/ZIPK, and this interaction may disrupt interaction with transcription factors such as TCF7L2/TCF4. Forms a transcriptional repressor complex with CHD7, PPARG and SETDB1. Interacts with RNF138/NARF. Interacts with ATF5; the interaction stabilizes ATF5 at the protein level in a kinase-independent manner. It depends on Mg(2+) as a cofactor. Phosphorylated on Thr-305. Intermolecular autophosphorylation on Thr-305 activates the enzyme.

Its subcellular location is the nucleus. The protein resides in the cytoplasm. It carries out the reaction L-seryl-[protein] + ATP = O-phospho-L-seryl-[protein] + ADP + H(+). It catalyses the reaction L-threonyl-[protein] + ATP = O-phospho-L-threonyl-[protein] + ADP + H(+). With respect to regulation, activated by the non-canonical Wnt signaling pathway, in which WNT5A leads to activation of MAP3K7/TAK1 and HIPK2, which subsequently phosphorylates and activates this protein. Activated by dimerization and subsequent intermolecular autophosphorylation on Thr-305. Other cytokines such as IL6 may also activate this regulatory circuit. In terms of biological role, serine/threonine-protein kinase that regulates a number of transcription factors with key roles in cell fate determination. Positive effector of the non-canonical Wnt signaling pathway, acting downstream of WNT5A, MAP3K7/TAK1 and HIPK2. Negative regulator of the canonical Wnt/beta-catenin signaling pathway. Binds to and phosphorylates TCF7L2/TCF4 and LEF1, promoting the dissociation of the TCF7L2/LEF1/beta-catenin complex from DNA, as well as the ubiquitination and subsequent proteolysis of LEF1. Together these effects inhibit the transcriptional activation of canonical Wnt/beta-catenin target genes. Negative regulator of the Notch signaling pathway. Binds to and phosphorylates NOTCH1, thereby preventing the formation of a transcriptionally active ternary complex of NOTCH1, RBPJ/RBPSUH and MAML1. Negative regulator of the MYB family of transcription factors. Phosphorylation of MYB leads to its subsequent proteolysis while phosphorylation of MYBL1 and MYBL2 inhibits their interaction with the coactivator CREBBP. Other transcription factors may also be inhibited by direct phosphorylation of CREBBP itself. Acts downstream of IL6 and MAP3K7/TAK1 to phosphorylate STAT3, which is in turn required for activation of NLK by MAP3K7/TAK1. Upon IL1B stimulus, cooperates with ATF5 to activate the transactivation activity of C/EBP subfamily members. Phosphorylates ATF5 but also stabilizes ATF5 protein levels in a kinase-independent manner. Acts as an inhibitor of the mTORC1 complex in response to osmotic stress by mediating phosphorylation of RPTOR, thereby preventing recruitment of the mTORC1 complex to lysosomes. This Bos taurus (Bovine) protein is Serine/threonine-protein kinase NLK (NLK).